Consider the following 71-residue polypeptide: uncharacterized protein (71 aa).

The chain crosses the membrane as a helical span at residues 44–66; sequence LFFLVFRRLFSWFLVLLPSPRFF.

The protein localises to the membrane. This is an uncharacterized protein from Saccharomyces cerevisiae (strain ATCC 204508 / S288c) (Baker's yeast).